Reading from the N-terminus, the 306-residue chain is Proteasome subunit beta (306 aa).

The propeptide at 1-67 is removed in mature form; by autocatalysis; it reads MTWPNRDQPA…GLPTDAVPHG (67 aa). Residue Thr-68 is the Nucleophile of the active site.

It belongs to the peptidase T1B family. As to quaternary structure, the 20S proteasome core is composed of 14 alpha and 14 beta subunits that assemble into four stacked heptameric rings, resulting in a barrel-shaped structure. The two inner rings, each composed of seven catalytic beta subunits, are sandwiched by two outer rings, each composed of seven alpha subunits. The catalytic chamber with the active sites is on the inside of the barrel. Has a gated structure, the ends of the cylinder being occluded by the N-termini of the alpha-subunits. Is capped by the proteasome-associated ATPase, ARC.

It is found in the cytoplasm. It catalyses the reaction Cleavage of peptide bonds with very broad specificity.. Its pathway is protein degradation; proteasomal Pup-dependent pathway. The formation of the proteasomal ATPase ARC-20S proteasome complex, likely via the docking of the C-termini of ARC into the intersubunit pockets in the alpha-rings, may trigger opening of the gate for substrate entry. Interconversion between the open-gate and close-gate conformations leads to a dynamic regulation of the 20S proteasome proteolysis activity. Component of the proteasome core, a large protease complex with broad specificity involved in protein degradation. This chain is Proteasome subunit beta, found in Mycolicibacterium vanbaalenii (strain DSM 7251 / JCM 13017 / BCRC 16820 / KCTC 9966 / NRRL B-24157 / PYR-1) (Mycobacterium vanbaalenii).